Consider the following 131-residue polypeptide: S-adenosylmethionine decarboxylase proenzyme (131 aa).

The active-site Schiff-base intermediate with substrate; via pyruvic acid is the serine 64. Serine 64 is subject to Pyruvic acid (Ser); by autocatalysis. Histidine 69 serves as the catalytic Proton acceptor; for processing activity. Cysteine 84 acts as the Proton donor; for catalytic activity in catalysis.

This sequence belongs to the prokaryotic AdoMetDC family. Type 1 subfamily. Heterotetramer of two alpha and two beta chains arranged as a dimer of alpha/beta heterodimers. The cofactor is pyruvate. Is synthesized initially as an inactive proenzyme. Formation of the active enzyme involves a self-maturation process in which the active site pyruvoyl group is generated from an internal serine residue via an autocatalytic post-translational modification. Two non-identical subunits are generated from the proenzyme in this reaction, and the pyruvate is formed at the N-terminus of the alpha chain, which is derived from the carboxyl end of the proenzyme. The post-translation cleavage follows an unusual pathway, termed non-hydrolytic serinolysis, in which the side chain hydroxyl group of the serine supplies its oxygen atom to form the C-terminus of the beta chain, while the remainder of the serine residue undergoes an oxidative deamination to produce ammonia and the pyruvoyl group blocking the N-terminus of the alpha chain.

It catalyses the reaction S-adenosyl-L-methionine + H(+) = S-adenosyl 3-(methylsulfanyl)propylamine + CO2. The protein operates within amine and polyamine biosynthesis; S-adenosylmethioninamine biosynthesis; S-adenosylmethioninamine from S-adenosyl-L-methionine: step 1/1. Catalyzes the decarboxylation of S-adenosylmethionine to S-adenosylmethioninamine (dcAdoMet), the propylamine donor required for the synthesis of the polyamines spermine and spermidine from the diamine putrescine. This is S-adenosylmethionine decarboxylase proenzyme from Thermoplasma acidophilum (strain ATCC 25905 / DSM 1728 / JCM 9062 / NBRC 15155 / AMRC-C165).